The following is a 382-amino-acid chain: Galactokinase (382 aa).

Substrate is bound at residue 34 to 37; sequence EHTD. 124–130 is an ATP binding site; it reads GAGLSSS. Residues S130 and E162 each contribute to the Mg(2+) site. Catalysis depends on D174, which acts as the Proton acceptor. Substrate is bound at residue Y223.

It belongs to the GHMP kinase family. GalK subfamily.

The protein resides in the cytoplasm. The catalysed reaction is alpha-D-galactose + ATP = alpha-D-galactose 1-phosphate + ADP + H(+). It participates in carbohydrate metabolism; galactose metabolism. Functionally, catalyzes the transfer of the gamma-phosphate of ATP to D-galactose to form alpha-D-galactose-1-phosphate (Gal-1-P). This is Galactokinase from Escherichia coli O81 (strain ED1a).